The following is a 336-amino-acid chain: Neuropeptides B/W receptor type 2 (336 aa).

The interval 1 to 25 is disordered; that stretch reads MMEATGLEGLESTSSPCPGSTGTGL. Topologically, residues 1–45 are extracellular; the sequence is MMEATGLEGLESTSSPCPGSTGTGLSWDNGTRHNATFPEPLPALY. Positions 12 to 25 are enriched in low complexity; it reads STSSPCPGSTGTGL. N-linked (GlcNAc...) asparagine glycans are attached at residues N29 and N34. Residues 46-68 form a helical membrane-spanning segment; the sequence is VLLPVVYSVICAVGLVGNAAVIC. Topologically, residues 69-80 are cytoplasmic; sequence VILRAPKMKTVT. A helical transmembrane segment spans residues 81-103; it reads HVFILNLAIADGLFTLVLPTNIA. Residues 104–127 are Extracellular-facing; it reads EHLLQRWPFGEVLCKLVLAIDHCN. Cysteines 117 and 197 form a disulfide. A helical transmembrane segment spans residues 128–146; that stretch reads IFSSVYFLAAMSIDRYLVV. Residues 147 to 165 lie on the Cytoplasmic side of the membrane; that stretch reads LATARSRRMPRRTVHRAKV. Residues 166-188 form a helical membrane-spanning segment; the sequence is ASLCVWLGVTVAVLPFLTFAGVY. The Extracellular segment spans residues 189 to 213; the sequence is NNELQVTSCGLSFPRPERAWFQASR. The helical transmembrane segment at 214-236 threads the bilayer; that stretch reads IYTLVLGFVVPMCTLCVLYADLL. Over 237 to 256 the chain is Cytoplasmic; sequence RRLRALRLHSGAKALGKAKR. The helical transmembrane segment at 257–279 threads the bilayer; the sequence is KVSLLVLAVLAVGLLCWTPFHLA. The Extracellular segment spans residues 280–293; that stretch reads SIVALTTDLPQTPL. The helical transmembrane segment at 294–316 threads the bilayer; it reads VIIVSYVVTSLSYTSSCLNPFLY. At 317–336 the chain is on the cytoplasmic side; the sequence is AFLDHSFRKSLRTACRCQGA.

The protein belongs to the G-protein coupled receptor 1 family.

It is found in the cell membrane. Functionally, interacts specifically with a number of opioid ligands. Receptor for neuropeptides B and W, which may be involved in neuroendocrine system regulation, food intake and the organization of other signals. This chain is Neuropeptides B/W receptor type 2 (NPBWR2), found in Bos taurus (Bovine).